The sequence spans 207 residues: Serotonin N-acetyltransferase (207 aa).

Residue Thr-31 is modified to Phosphothreonine; by PKA. The N-acetyltransferase domain maps to 35-194 (SEFRCLTPQD…SLTFMELQCS (160 aa)). Position 124 (Leu-124) interacts with substrate. Residues 124–126 (LAV) and 132–137 (QQGKGS) each bind acetyl-CoA. Met-159 serves as a coordination point for substrate. 168 to 170 (YEK) is an acetyl-CoA binding site. Position 205 is a phosphoserine (Ser-205).

It belongs to the acetyltransferase family. AANAT subfamily. As to quaternary structure, monomer. Interacts with several 14-3-3 proteins, including YWHAB, YWHAE, YWHAG and YWHAZ, preferentially when phosphorylated at Thr-31. Phosphorylation on Ser-205 also allows binding to YWHAZ, but with lower affinity. The interaction with YWHAZ considerably increases affinity for arylalkylamines and acetyl-CoA and protects the enzyme from dephosphorylation and proteasomal degradation. It may also prevent thiol-dependent inactivation. Post-translationally, cAMP-dependent phosphorylation on both N-terminal Thr-31 and C-terminal Ser-205 regulates AANAT activity by promoting interaction with 14-3-3 proteins. In terms of tissue distribution, highly expressed in pineal gland and retina. Also detected in heart and intestine.

It is found in the cytoplasm. It carries out the reaction a 2-arylethylamine + acetyl-CoA = an N-acetyl-2-arylethylamine + CoA + H(+). Its pathway is aromatic compound metabolism; melatonin biosynthesis; melatonin from serotonin: step 1/2. Functionally, controls the night/day rhythm of melatonin production in the pineal gland. Catalyzes the N-acetylation of serotonin into N-acetylserotonin, the penultimate step in the synthesis of melatonin. The chain is Serotonin N-acetyltransferase (AANAT) from Mesocricetus auratus (Golden hamster).